A 130-amino-acid polypeptide reads, in one-letter code: Small ribosomal subunit protein uS11 (130 aa).

Belongs to the universal ribosomal protein uS11 family. As to quaternary structure, part of the 30S ribosomal subunit. Interacts with proteins S7 and S18. Binds to IF-3.

Its function is as follows. Located on the platform of the 30S subunit, it bridges several disparate RNA helices of the 16S rRNA. Forms part of the Shine-Dalgarno cleft in the 70S ribosome. The chain is Small ribosomal subunit protein uS11 from Ruegeria pomeroyi (strain ATCC 700808 / DSM 15171 / DSS-3) (Silicibacter pomeroyi).